The sequence spans 237 residues: Ribonuclease PH (237 aa).

Phosphate is bound by residues arginine 86 and 124 to 126; that span reads GTR.

This sequence belongs to the RNase PH family. As to quaternary structure, homohexameric ring arranged as a trimer of dimers.

It carries out the reaction tRNA(n+1) + phosphate = tRNA(n) + a ribonucleoside 5'-diphosphate. Functionally, phosphorolytic 3'-5' exoribonuclease that plays an important role in tRNA 3'-end maturation. Removes nucleotide residues following the 3'-CCA terminus of tRNAs; can also add nucleotides to the ends of RNA molecules by using nucleoside diphosphates as substrates, but this may not be physiologically important. Probably plays a role in initiation of 16S rRNA degradation (leading to ribosome degradation) during starvation. The protein is Ribonuclease PH of Cereibacter sphaeroides (strain ATCC 17029 / ATH 2.4.9) (Rhodobacter sphaeroides).